Reading from the N-terminus, the 387-residue chain is Palmitoyltransferase ZDHHC16A (387 aa).

The next 2 membrane-spanning stretches (helical) occupy residues 73–93 and 106–126; these read WFGMVFVFLVVALTSSVVFIA and SPGWMIWHICYGHWNLVMIVF. The region spanning 150-200 is the DHHC domain; sequence SVCKKCIIPKPARSHHCGICKTCILKMDHHCPWLNNCVGHFNHRYFFSFCL. Residue Cys180 is the S-palmitoyl cysteine intermediate of the active site. The next 3 helical transmembrane spans lie at 198-218, 236-256, and 281-301; these read FCLFLTLGCMYCSVSGRHLFI, GVPVTGIGLLIGIVPSAGVAG, and VIYMWVLTSTVSVALGALTLW.

This sequence belongs to the DHHC palmitoyltransferase family. Expressed in the central nervous system (CNS). Expressed in the developing forebrain, and especially in the telencephalon.

It localises to the endoplasmic reticulum membrane. It catalyses the reaction L-cysteinyl-[protein] + hexadecanoyl-CoA = S-hexadecanoyl-L-cysteinyl-[protein] + CoA. In terms of biological role, palmitoyl acyltransferase that mediates palmitoylation of proteins and is required during embryonic heart development. Involved in the proliferation of neural stem cells by regulating the FGF/ERK pathway. Involved in the proliferation of neural stem cells by regulating the FGF/ERK pathway. The protein is Palmitoyltransferase ZDHHC16A of Danio rerio (Zebrafish).